Consider the following 1293-residue polypeptide: Phosphoribosylformylglycinamidine synthase (1293 aa).

Residues 305-316 (GAATGSGGEIRD) and Ala676 contribute to the ATP site. The tract at residues 305–328 (GAATGSGGEIRDEGATGRGSKPKA) is disordered. 4 residues coordinate Mg(2+): Asp677, Glu716, Asn720, and Asp884. Ser886 is a binding site for ATP. The 254-residue stretch at 1040–1293 (MAILREQGVN…MFRNARVNLG (254 aa)) folds into the Glutamine amidotransferase type-1 domain. Cys1133 acts as the Nucleophile in catalysis. Catalysis depends on residues His1258 and Glu1260.

This sequence in the N-terminal section; belongs to the FGAMS family. As to quaternary structure, monomer.

The protein resides in the cytoplasm. The catalysed reaction is N(2)-formyl-N(1)-(5-phospho-beta-D-ribosyl)glycinamide + L-glutamine + ATP + H2O = 2-formamido-N(1)-(5-O-phospho-beta-D-ribosyl)acetamidine + L-glutamate + ADP + phosphate + H(+). It functions in the pathway purine metabolism; IMP biosynthesis via de novo pathway; 5-amino-1-(5-phospho-D-ribosyl)imidazole from N(2)-formyl-N(1)-(5-phospho-D-ribosyl)glycinamide: step 1/2. Its function is as follows. Phosphoribosylformylglycinamidine synthase involved in the purines biosynthetic pathway. Catalyzes the ATP-dependent conversion of formylglycinamide ribonucleotide (FGAR) and glutamine to yield formylglycinamidine ribonucleotide (FGAM) and glutamate. The sequence is that of Phosphoribosylformylglycinamidine synthase from Shewanella sp. (strain MR-7).